The sequence spans 484 residues: Poly(A) RNA polymerase GLD2 (484 aa).

Phosphoserine is present on residues Ser62 and Ser69. A Nuclear localization signal motif is present at residues 76-92; it reads KRLSDEKNLPLDGKRQR. Residue Ser95 is modified to Phosphoserine. Residues Asp213 and Asp215 each contribute to the Mg(2+) site. The region spanning 386–440 is the PAP-associated domain; sequence NLGDLLLGFLKYYATEFDWNSQMISVREAKAIPRPDGIEWRNKYICVEEPFDGTN.

Belongs to the DNA polymerase type-B-like family. GLD2 subfamily. Interacts with CPEB1, CPEB2, CPSF1 and PABPC1. Interacts with QKI isoform QKI7; promoting recruitment to miRNA miR-122 and miR-122 stabilization. Requires Mg(2+) as cofactor. The cofactor is Mn(2+).

It localises to the cytoplasm. It is found in the nucleus. The enzyme catalyses RNA(n) + ATP = RNA(n)-3'-adenine ribonucleotide + diphosphate. In terms of biological role, cytoplasmic poly(A) RNA polymerase that adds successive AMP monomers to the 3'-end of specific RNAs, forming a poly(A) tail. In contrast to the canonical nuclear poly(A) RNA polymerase, it only adds poly(A) to selected cytoplasmic mRNAs. Does not play a role in replication-dependent histone mRNA degradation. Adds a single nucleotide to the 3' end of specific miRNAs, monoadenylation stabilizes and prolongs the activity of some but not all miRNAs. This Bos taurus (Bovine) protein is Poly(A) RNA polymerase GLD2.